The primary structure comprises 258 residues: Terpene cyclase macJ (258 aa).

A run of 7 helical transmembrane segments spans residues 29–49 (VPDGFTAISGILWSISYILMA), 58–78 (YAMPLHCLCLNITWEAVYGFV), 83–103 (LLNQVVFAQWMIVDVVLFYAI), 124–144 (IIVVGCVICLWLHLAIAATFI), 151–171 (VVFMTAWPMQVLINFSSIAQL), 181–201 (SWGIWWTRMLGTIAAACCFFW), and 220–240 (FLLLGSIGSDMVYAAVYVYVQ).

It belongs to the paxB family.

It localises to the membrane. It participates in secondary metabolite biosynthesis; terpenoid biosynthesis. Its function is as follows. Terpene cyclase; part of the gene cluster that mediates the biosynthesis of macrophorins, isoprenoid epoxycyclohexenones containing cyclized drimane moieties. The first step of the pathway is the synthesis of 6-methylsalicylic acid (6-MSA) by the polyketide synthase macA. 6-MSA is then converted to m-cresol by the decarboxylase macB. The cytochrome P450 monooxygenase macC then catalyzes the oxidation of m-cresol to toluquinol. Epoxidation of toluquinol is then performed by the short chain dehydrogenase macD, with the help of macE, and a further prenylation by macG leads to 7-deacetoxyyanuthone A. The next step is the hydroxylation of C-22 of 7-deacetoxyyanuthone A by the cytochrome P450 monooxygenase macH to yield 22-deacetylyanuthone A. O-Mevalon transferase macI then attaches mevalon to the hydroxyl group of 22-deacetylyanuthone A to produce yanuthone E. The terpene cyclase macJ catalyzes the cyclization of 22-deacetylyanuthone A to macrophorin A. MacJ is also able to catalyze cyclization of yanuthone E and 7-deacetoxyyanuthone A to their corresponding macrophorins. The macJ products can be further modified by macH and macJ, as well as by the FAD-dependent monooxygenase macF, to produce additional macrophorins, including 4'-oxomacrophorin A, 4'-oxomacrophorin D and 4'-oxomacrophorin E. This Penicillium terrestre protein is Terpene cyclase macJ.